The sequence spans 463 residues: Chromosomal replication initiator protein DnaA (463 aa).

The domain I, interacts with DnaA modulators stretch occupies residues 1–83; the sequence is MSTNQIILTD…LQLFQHYNNT (83 aa). The domain II stretch occupies residues 83-124; it reads TIKSIEIITKELPGITQTVIALPTKTFADIGSSELNAENIFS. The tract at residues 125–343 is domain III, AAA+ region; the sequence is TLDVRFTFDN…GALNKVIAHS (219 aa). Gly171, Gly173, Lys174, and Thr175 together coordinate ATP. The interval 344 to 463 is domain IV, binds dsDNA; the sequence is NFTLKEITLE…INLLMKILQN (120 aa).

This sequence belongs to the DnaA family. As to quaternary structure, oligomerizes as a right-handed, spiral filament on DNA at oriC.

Its subcellular location is the cytoplasm. In terms of biological role, plays an essential role in the initiation and regulation of chromosomal replication. ATP-DnaA binds to the origin of replication (oriC) to initiate formation of the DNA replication initiation complex once per cell cycle. Binds the DnaA box (a 9 base pair repeat at the origin) and separates the double-stranded (ds)DNA. Forms a right-handed helical filament on oriC DNA; dsDNA binds to the exterior of the filament while single-stranded (ss)DNA is stabiized in the filament's interior. The ATP-DnaA-oriC complex binds and stabilizes one strand of the AT-rich DNA unwinding element (DUE), permitting loading of DNA polymerase. After initiation quickly degrades to an ADP-DnaA complex that is not apt for DNA replication. Binds acidic phospholipids. In Rickettsia massiliae (strain Mtu5), this protein is Chromosomal replication initiator protein DnaA.